The chain runs to 604 residues: Procollagen galactosyltransferase 1 (604 aa).

Residues 1–18 (MHLLCFFFLLLWTGPARS) form the signal peptide. N-linked (GlcNAc...) asparagine glycans are attached at residues Asn-78, Asn-166, Asn-363, and Asn-561. Over residues 570-580 (RARSRKSREQE) the composition is skewed to basic and acidic residues. The disordered stretch occupies residues 570 to 604 (RARSRKSREQEELSSEAQNTDVLQSPLDSTARDEL). Positions 584-597 (SEAQNTDVLQSPLD) are enriched in polar residues. Positions 601–604 (RDEL) match the Prevents secretion from ER motif.

This sequence belongs to the glycosyltransferase 25 family.

It is found in the endoplasmic reticulum lumen. It carries out the reaction (5R)-5-hydroxy-L-lysyl-[collagen] + UDP-alpha-D-galactose = (5R)-5-O-(beta-D-galactosyl)-5-hydroxy-L-lysyl-[collagen] + UDP + H(+). In terms of biological role, beta-galactosyltransferase that transfers beta-galactose to hydroxylysine residues of type I collagen. By acting on collagen glycosylation, facilitates the formation of collagen triple helix. The protein is Procollagen galactosyltransferase 1 (colgalt1) of Danio rerio (Zebrafish).